The chain runs to 126 residues: Holo-[acyl-carrier-protein] synthase (126 aa).

2 residues coordinate Mg(2+): aspartate 8 and glutamate 57.

The protein belongs to the P-Pant transferase superfamily. AcpS family. Requires Mg(2+) as cofactor.

It localises to the cytoplasm. The catalysed reaction is apo-[ACP] + CoA = holo-[ACP] + adenosine 3',5'-bisphosphate + H(+). Its function is as follows. Transfers the 4'-phosphopantetheine moiety from coenzyme A to a Ser of acyl-carrier-protein. In Leptospira interrogans serogroup Icterohaemorrhagiae serovar copenhageni (strain Fiocruz L1-130), this protein is Holo-[acyl-carrier-protein] synthase.